A 197-amino-acid polypeptide reads, in one-letter code: Ribonuclease HII (197 aa).

The region spanning 11–197 (HLIAGVDEVG…FAPVKKILGL (187 aa)) is the RNase H type-2 domain. Residues D17, E18, and D109 each coordinate a divalent metal cation.

It belongs to the RNase HII family. The cofactor is Mn(2+). It depends on Mg(2+) as a cofactor.

The protein localises to the cytoplasm. It catalyses the reaction Endonucleolytic cleavage to 5'-phosphomonoester.. Functionally, endonuclease that specifically degrades the RNA of RNA-DNA hybrids. This Actinobacillus pleuropneumoniae serotype 5b (strain L20) protein is Ribonuclease HII.